The sequence spans 611 residues: tRNA uridine 5-carboxymethylaminomethyl modification enzyme MnmG (611 aa).

Residues 8–13 (GAGHAG), Val-120, and Ser-175 each bind FAD. 268 to 282 (GPRYCPSIEDKIVRF) serves as a coordination point for NAD(+). Gln-365 serves as a coordination point for FAD.

It belongs to the MnmG family. Homodimer. Heterotetramer of two MnmE and two MnmG subunits. The cofactor is FAD.

It is found in the cytoplasm. NAD-binding protein involved in the addition of a carboxymethylaminomethyl (cmnm) group at the wobble position (U34) of certain tRNAs, forming tRNA-cmnm(5)s(2)U34. This Mycoplasmoides gallisepticum (strain R(low / passage 15 / clone 2)) (Mycoplasma gallisepticum) protein is tRNA uridine 5-carboxymethylaminomethyl modification enzyme MnmG.